The sequence spans 66 residues: Large ribosomal subunit protein bL33c (66 aa).

This sequence belongs to the bacterial ribosomal protein bL33 family.

The protein localises to the plastid. It is found in the chloroplast. The chain is Large ribosomal subunit protein bL33c from Liriodendron tulipifera (Tuliptree).